Here is a 294-residue protein sequence, read N- to C-terminus: Protoheme IX farnesyltransferase (294 aa).

The next 9 helical transmembrane spans lie at valine 22–proline 42, isoleucine 46–cysteine 66, isoleucine 89–leucine 109, leucine 116–leucine 136, asparagine 143–alanine 163, alanine 170–leucine 190, phenylalanine 212–phenylalanine 232, valine 234–tryptophan 254, and phenylalanine 272–leucine 292.

This sequence belongs to the UbiA prenyltransferase family. Protoheme IX farnesyltransferase subfamily.

Its subcellular location is the cell inner membrane. It carries out the reaction heme b + (2E,6E)-farnesyl diphosphate + H2O = Fe(II)-heme o + diphosphate. Its pathway is porphyrin-containing compound metabolism; heme O biosynthesis; heme O from protoheme: step 1/1. In terms of biological role, converts heme B (protoheme IX) to heme O by substitution of the vinyl group on carbon 2 of heme B porphyrin ring with a hydroxyethyl farnesyl side group. This Janthinobacterium sp. (strain Marseille) (Minibacterium massiliensis) protein is Protoheme IX farnesyltransferase.